The primary structure comprises 92 residues: Acylphosphatase (92 aa).

In terms of domain architecture, Acylphosphatase-like spans 6–92; it reads RMYVIVYGIV…TGEFASFDTY (87 aa). Active-site residues include Arg-21 and Asn-39.

It belongs to the acylphosphatase family.

The enzyme catalyses an acyl phosphate + H2O = a carboxylate + phosphate + H(+). The chain is Acylphosphatase (acyP) from Sulfolobus acidocaldarius (strain ATCC 33909 / DSM 639 / JCM 8929 / NBRC 15157 / NCIMB 11770).